We begin with the raw amino-acid sequence, 236 residues long: MNPTRGAVGGTDPRPAAVVLLSGGLDSATVLAIANQQGFACHALSFRYGQRHEVELAAARRVASALGVVRHVVVDIDLGVFGGSALTDPTIAVPAAGTAEEIPVTYVPARNTIFLSFGLALAETAGAWDVFIGASSVDYSGYPDCRPEYLAAYQAMANLATKATVSGERTLSVHAPLMHLSKADTIRLGLSLGVDYGLTHSCYDPGPDGRPCGRCDSCSLRERGFTEVGVPDPAGG.

Residue 21 to 31 (LSGGLDSATVL) coordinates ATP. Cys202, Cys212, Cys215, and Cys218 together coordinate Zn(2+).

It belongs to the QueC family. Requires Zn(2+) as cofactor.

It carries out the reaction 7-carboxy-7-deazaguanine + NH4(+) + ATP = 7-cyano-7-deazaguanine + ADP + phosphate + H2O + H(+). Its pathway is purine metabolism; 7-cyano-7-deazaguanine biosynthesis. Functionally, catalyzes the ATP-dependent conversion of 7-carboxy-7-deazaguanine (CDG) to 7-cyano-7-deazaguanine (preQ(0)). This Frankia casuarinae (strain DSM 45818 / CECT 9043 / HFP020203 / CcI3) protein is 7-cyano-7-deazaguanine synthase.